The primary structure comprises 2207 residues: Mediator of RNA polymerase II transcription subunit 13-like (2207 aa).

Residues 337–355 (VQSAASHLGSQDGGMSTMH) are compositionally biased toward polar residues. Disordered regions lie at residues 337-368 (VQSAASHLGSQDGGMSTMHSPKRSRKTPPKLH), 384-403 (AQSKRSQMSTPTREEEAAHS), 431-479 (VGPS…KRPL), and 519-574 (KYDK…VPVN). Positions 356–368 (SPKRSRKTPPKLH) are enriched in basic residues. Over residues 384–394 (AQSKRSQMSTP) the composition is skewed to polar residues. Residues 442-453 (PGFSAGLPSSSS) are compositionally biased toward low complexity. Residues 463 to 475 (KTTERQEKGDKLQ) are compositionally biased toward basic and acidic residues. Polar residues predominate over residues 528 to 539 (SRNTSKQMNLNP). Positions 546–555 (PISPLPPTLS) are enriched in pro residues. Serine 548 and serine 555 each carry phosphoserine. The LXXLL motif 1 signature appears at 664 to 668 (LQRLL). The segment covering 731–747 (GTEKDSLKKNKSEDGFG) has biased composition (basic and acidic residues). Residues 731–767 (GTEKDSLKKNKSEDGFGTKDVTTPGHSTPVPDGKNAM) are disordered. A phosphoserine mark is found at serine 812 and serine 821. Positions 816 to 847 (ELGAVSPALRSSKMPTVGTEERPPGKDGRAAG) are disordered. A compositionally biased stretch (basic and acidic residues) spans 834-844 (TEERPPGKDGR). Serine 918 carries the phosphoserine modification. The interval 1004–1091 (DPDYVNTPQM…STTRPLNSVE (88 aa)) is disordered. The segment covering 1009–1019 (NTPQMNTPVTL) has biased composition (polar residues). Residues 1020 to 1031 (NSAAPASNSGAG) show a composition bias toward low complexity. Residues 1072 to 1087 (TDQGSPASTPSTTRPL) show a composition bias toward polar residues. An LXXLL motif 2 motif is present at residues 1224–1228 (LLLLL). A leucine-zipper region spans residues 1379-1400 (LPIPTLLVGYDKEFLTISPFSL). 2 disordered regions span residues 1523-1652 (LMPP…SVTE) and 2042-2077 (GNLHSSPNSSPVPSPGSPSGIGVGSHFQHSRSQGER). Low complexity predominate over residues 1541 to 1593 (PGNAGSLPSNSGSGAPPAGSAFNPTSSSSANPTTSSSSASSGPPGSSAASAPG). Polar residues-rich tracts occupy residues 1612-1624 (QNPSAGGSSTDRT) and 1635-1649 (PGQSCTQSSQDGQDS). Serine 2080 carries the phosphoserine modification.

The protein belongs to the Mediator complex subunit 13 family. In terms of assembly, component of the Mediator complex, which is composed of MED1, MED4, MED6, MED7, MED8, MED9, MED10, MED11, MED12, MED13, MED13L, MED14, MED15, MED16, MED17, MED18, MED19, MED20, MED21, MED22, MED23, MED24, MED25, MED26, MED27, MED29, MED30, MED31, CCNC, CDK8 and CDC2L6/CDK11. The MED12, MED13, CCNC and CDK8 subunits form a distinct module termed the CDK8 module. Mediator containing the CDK8 module is less active than Mediator lacking this module in supporting transcriptional activation. Individual preparations of the Mediator complex lacking one or more distinct subunits have been variously termed ARC, CRSP, DRIP, PC2, SMCC and TRAP. Highly expressed in heart and weakly expressed in brain, spleen, lung, liver, kidney and testis.

It is found in the nucleus. In terms of biological role, component of the Mediator complex, a coactivator involved in the regulated transcription of nearly all RNA polymerase II-dependent genes. Mediator functions as a bridge to convey information from gene-specific regulatory proteins to the basal RNA polymerase II transcription machinery. Mediator is recruited to promoters by direct interactions with regulatory proteins and serves as a scaffold for the assembly of a functional preinitiation complex with RNA polymerase II and the general transcription factors. This subunit may specifically regulate transcription of targets of the Wnt signaling pathway and SHH signaling pathway. This Mus musculus (Mouse) protein is Mediator of RNA polymerase II transcription subunit 13-like (Med13l).